The sequence spans 352 residues: Protein MGF 360-9L (352 aa).

This sequence belongs to the asfivirus MGF 360 family. Interacts with host STAT1; this interaction mediates STAT1 degradation through apoptosis. Interacts with host STAT2; this interaction mediates STAT2 degradation through the proteasome.

The protein localises to the host cytoplasm. Plays a role in virus cell tropism, and may be required for efficient virus replication in macrophages. In addition, inhibits IFN-beta-induced IFN-stimulated genes (ISGs) transcription. Mechanistically, degrades host STAT1 and STAT2 through apoptosis and ubiquitin-proteasome pathways respectively. This is Protein MGF 360-9L from Ornithodoros (relapsing fever ticks).